A 427-amino-acid polypeptide reads, in one-letter code: Glutamyl-tRNA reductase (427 aa).

Residues 49–52 (TCNR), S101, 106–108 (EPQ), and Q112 each bind substrate. C50 acts as the Nucleophile in catalysis. Residue 181-186 (GAGETI) coordinates NADP(+). A disordered region spans residues 407 to 427 (FPATPGYRHPPVRPDDADPAP). Residues 418-427 (VRPDDADPAP) show a composition bias toward basic and acidic residues.

It belongs to the glutamyl-tRNA reductase family. Homodimer.

The enzyme catalyses (S)-4-amino-5-oxopentanoate + tRNA(Glu) + NADP(+) = L-glutamyl-tRNA(Glu) + NADPH + H(+). Its pathway is porphyrin-containing compound metabolism; protoporphyrin-IX biosynthesis; 5-aminolevulinate from L-glutamyl-tRNA(Glu): step 1/2. Its function is as follows. Catalyzes the NADPH-dependent reduction of glutamyl-tRNA(Glu) to glutamate 1-semialdehyde (GSA). The chain is Glutamyl-tRNA reductase from Stenotrophomonas maltophilia (strain K279a).